Consider the following 197-residue polypeptide: Probable GTP-binding protein EngB (197 aa).

The EngB-type G domain occupies 22-195 (NLPEIAFVGR…VDYLFDDLVE (174 aa)). GTP is bound by residues 30–37 (GRSNVGKS), 57–61 (GKTRL), 75–78 (DLPG), 142–145 (TKSD), and 174–176 (FSS). Positions 37 and 59 each coordinate Mg(2+).

The protein belongs to the TRAFAC class TrmE-Era-EngA-EngB-Septin-like GTPase superfamily. EngB GTPase family. Mg(2+) is required as a cofactor.

In terms of biological role, necessary for normal cell division and for the maintenance of normal septation. This is Probable GTP-binding protein EngB from Clostridium perfringens (strain 13 / Type A).